The chain runs to 438 residues: L-cysteine:1D-myo-inositol 2-amino-2-deoxy-alpha-D-glucopyranoside ligase (438 aa).

Residues 1–27 (MDSWTSPDVPALPFTAEGPRVHDTARG) are disordered. C45 contacts Zn(2+). Residues 45–48 (CGIT), T60, and 83–85 (NVT) contribute to the L-cysteinyl-5'-AMP site. Positions 47-57 (ITPYDATHLGH) match the 'HIGH' region motif. A 'ERGGDP' region motif is present at residues 197–202 (DRGGDP). W238 contributes to the L-cysteinyl-5'-AMP binding site. Residue C242 participates in Zn(2+) binding. 260–262 (GDD) serves as a coordination point for L-cysteinyl-5'-AMP. H267 contacts Zn(2+). Position 293 (V293) interacts with L-cysteinyl-5'-AMP. The 'KMSKS' region motif lies at 299–303 (KMSKS).

It belongs to the class-I aminoacyl-tRNA synthetase family. MshC subfamily. As to quaternary structure, monomer. Requires Zn(2+) as cofactor.

It carries out the reaction 1D-myo-inositol 2-amino-2-deoxy-alpha-D-glucopyranoside + L-cysteine + ATP = 1D-myo-inositol 2-(L-cysteinylamino)-2-deoxy-alpha-D-glucopyranoside + AMP + diphosphate + H(+). Its function is as follows. Catalyzes the ATP-dependent condensation of GlcN-Ins and L-cysteine to form L-Cys-GlcN-Ins. The chain is L-cysteine:1D-myo-inositol 2-amino-2-deoxy-alpha-D-glucopyranoside ligase from Kytococcus sedentarius (strain ATCC 14392 / DSM 20547 / JCM 11482 / CCUG 33030 / NBRC 15357 / NCTC 11040 / CCM 314 / 541) (Micrococcus sedentarius).